A 138-amino-acid polypeptide reads, in one-letter code: Basic phospholipase A2 Bs-N6 (138 aa).

The N-terminal stretch at 1 to 16 (MRTLWIVAVLLVGVEG) is a signal peptide. 7 disulfide bridges follow: cysteine 42–cysteine 131, cysteine 44–cysteine 60, cysteine 59–cysteine 111, cysteine 65–cysteine 138, cysteine 66–cysteine 104, cysteine 73–cysteine 97, and cysteine 91–cysteine 102. 3 residues coordinate Ca(2+): tyrosine 43, glycine 45, and glycine 47. Residue histidine 63 is part of the active site. Aspartate 64 serves as a coordination point for Ca(2+). Residue aspartate 105 is part of the active site.

As to quaternary structure, monomer. It depends on Ca(2+) as a cofactor. Post-translationally, contains 7 disulfide bonds. In terms of tissue distribution, expressed by the venom gland.

It is found in the secreted. The catalysed reaction is a 1,2-diacyl-sn-glycero-3-phosphocholine + H2O = a 1-acyl-sn-glycero-3-phosphocholine + a fatty acid + H(+). In terms of biological role, snake venom phospholipase A2 (PLA2) that shows myotoxic activities. PLA2 catalyzes the calcium-dependent hydrolysis of the 2-acyl groups in 3-sn-phosphoglycerides. In Bothriechis schlegelii (Eyelash palm pitviper), this protein is Basic phospholipase A2 Bs-N6.